A 700-amino-acid chain; its full sequence is Elongation factor G (700 aa).

Residues 8 to 290 form the tr-type G domain; the sequence is ERYRNIGISA…GVIDFMPSPI (283 aa). Residues 17 to 24, 88 to 92, and 142 to 145 contribute to the GTP site; these read AHIDAGKT, DTPGH, and NKMD.

The protein belongs to the TRAFAC class translation factor GTPase superfamily. Classic translation factor GTPase family. EF-G/EF-2 subfamily.

The protein localises to the cytoplasm. Catalyzes the GTP-dependent ribosomal translocation step during translation elongation. During this step, the ribosome changes from the pre-translocational (PRE) to the post-translocational (POST) state as the newly formed A-site-bound peptidyl-tRNA and P-site-bound deacylated tRNA move to the P and E sites, respectively. Catalyzes the coordinated movement of the two tRNA molecules, the mRNA and conformational changes in the ribosome. This Methylibium petroleiphilum (strain ATCC BAA-1232 / LMG 22953 / PM1) protein is Elongation factor G.